The following is a 588-amino-acid chain: Probable cytochrome c oxidase subunit 1-beta (588 aa).

Positions 1–26 (MTATPAQRRPALPATRPYPARHGPKG) are disordered. A helical membrane pass occupies residues 43–63 (VLYLVSATGFFLIGGLLALLM). Histidine 87 lines the Fe(II)-heme a pocket. Transmembrane regions (helical) follow at residues 90-110 (IMLL…VLPL), 128-148 (WLYL…GGAA), 171-191 (LWIL…VNMI), 214-234 (ILIT…ALMA), 259-279 (LFWF…FGII), and 291-311 (IFGY…SMAV). Residues histidine 265 and tyrosine 269 each coordinate Cu cation. A cross-link (1'-histidyl-3'-tyrosine (His-Tyr)) is located at residues 265–269 (HPEVY). Residues histidine 314 and histidine 315 each coordinate Cu cation. 2 helical membrane passes run 320–340 (GAVL…PTGV) and 360–380 (MLFA…GVIL). Histidine 398 provides a ligand contact to heme a3. The next 3 membrane-spanning stretches (helical) occupy residues 399 to 419 (FHYV…YFWF), 434 to 454 (LHFW…HWLG), and 477 to 497 (VSTI…WNGF). Residue histidine 400 participates in Fe(II)-heme a binding. Positions 557–588 (AEAHAGRRAGHGAGAELSVPSTVATKDDDHTS) are disordered.

Belongs to the heme-copper respiratory oxidase family. As to quaternary structure, associates with subunits II, III and IV to form cytochrome c oxidase. Cu(2+) is required as a cofactor. It depends on heme as a cofactor.

Its subcellular location is the cell membrane. The catalysed reaction is 4 Fe(II)-[cytochrome c] + O2 + 8 H(+)(in) = 4 Fe(III)-[cytochrome c] + 2 H2O + 4 H(+)(out). Its pathway is energy metabolism; oxidative phosphorylation. Its function is as follows. Cytochrome c oxidase is the component of the respiratory chain that catalyzes the reduction of oxygen to water. Subunits 1-3 form the functional core of the enzyme complex. CO I is the catalytic subunit of the enzyme. Electrons originating in cytochrome c are transferred via the copper A center of subunit 2 and heme A of subunit 1 to the bimetallic center formed by heme A3 and copper B. This Nocardia farcinica (strain IFM 10152) protein is Probable cytochrome c oxidase subunit 1-beta (ctaD2).